The primary structure comprises 141 residues: ATP synthase epsilon chain (141 aa).

The protein belongs to the ATPase epsilon chain family. As to quaternary structure, F-type ATPases have 2 components, CF(1) - the catalytic core - and CF(0) - the membrane proton channel. CF(1) has five subunits: alpha(3), beta(3), gamma(1), delta(1), epsilon(1). CF(0) has three main subunits: a, b and c.

The protein resides in the cell membrane. Functionally, produces ATP from ADP in the presence of a proton gradient across the membrane. The polypeptide is ATP synthase epsilon chain (Lactococcus lactis subsp. cremoris (strain MG1363)).